Consider the following 151-residue polypeptide: Protein NrdI (151 aa).

The protein belongs to the NrdI family.

Functionally, probably involved in ribonucleotide reductase function. The protein is Protein NrdI of Mesoplasma florum (strain ATCC 33453 / NBRC 100688 / NCTC 11704 / L1) (Acholeplasma florum).